A 141-amino-acid chain; its full sequence is Large ribosomal subunit protein uL11 (141 aa).

The protein belongs to the universal ribosomal protein uL11 family. As to quaternary structure, part of the ribosomal stalk of the 50S ribosomal subunit. Interacts with L10 and the large rRNA to form the base of the stalk. L10 forms an elongated spine to which L12 dimers bind in a sequential fashion forming a multimeric L10(L12)X complex. In terms of processing, one or more lysine residues are methylated.

Its function is as follows. Forms part of the ribosomal stalk which helps the ribosome interact with GTP-bound translation factors. This is Large ribosomal subunit protein uL11 from Streptococcus agalactiae serotype Ia (strain ATCC 27591 / A909 / CDC SS700).